The primary structure comprises 336 residues: Holliday junction branch migration complex subunit RuvB (336 aa).

Residues 4–184 (ADRLISAGTT…FGIVQRLEFY (181 aa)) form a large ATPase domain (RuvB-L) region. ATP is bound by residues Ile-23, Arg-24, Gly-65, Lys-68, Thr-69, Thr-70, 131-133 (EDY), Arg-174, Tyr-184, and Arg-221. A Mg(2+)-binding site is contributed by Thr-69. Residues 185-255 (QVPDLQYIVS…IAAQALDMLN (71 aa)) are small ATPAse domain (RuvB-S). The segment at 258–336 (AEGFDYMDRK…HFGITPPEMP (79 aa)) is head domain (RuvB-H). Arg-294, Arg-313, and Arg-318 together coordinate DNA.

Belongs to the RuvB family. Homohexamer. Forms an RuvA(8)-RuvB(12)-Holliday junction (HJ) complex. HJ DNA is sandwiched between 2 RuvA tetramers; dsDNA enters through RuvA and exits via RuvB. An RuvB hexamer assembles on each DNA strand where it exits the tetramer. Each RuvB hexamer is contacted by two RuvA subunits (via domain III) on 2 adjacent RuvB subunits; this complex drives branch migration. In the full resolvosome a probable DNA-RuvA(4)-RuvB(12)-RuvC(2) complex forms which resolves the HJ.

The protein resides in the cytoplasm. It carries out the reaction ATP + H2O = ADP + phosphate + H(+). Functionally, the RuvA-RuvB-RuvC complex processes Holliday junction (HJ) DNA during genetic recombination and DNA repair, while the RuvA-RuvB complex plays an important role in the rescue of blocked DNA replication forks via replication fork reversal (RFR). RuvA specifically binds to HJ cruciform DNA, conferring on it an open structure. The RuvB hexamer acts as an ATP-dependent pump, pulling dsDNA into and through the RuvAB complex. RuvB forms 2 homohexamers on either side of HJ DNA bound by 1 or 2 RuvA tetramers; 4 subunits per hexamer contact DNA at a time. Coordinated motions by a converter formed by DNA-disengaged RuvB subunits stimulates ATP hydrolysis and nucleotide exchange. Immobilization of the converter enables RuvB to convert the ATP-contained energy into a lever motion, pulling 2 nucleotides of DNA out of the RuvA tetramer per ATP hydrolyzed, thus driving DNA branch migration. The RuvB motors rotate together with the DNA substrate, which together with the progressing nucleotide cycle form the mechanistic basis for DNA recombination by continuous HJ branch migration. Branch migration allows RuvC to scan DNA until it finds its consensus sequence, where it cleaves and resolves cruciform DNA. The polypeptide is Holliday junction branch migration complex subunit RuvB (Escherichia coli O17:K52:H18 (strain UMN026 / ExPEC)).